Consider the following 200-residue polypeptide: Probable GTP-binding protein EngB (200 aa).

Residues 24–198 (EGMEVAFAGR…QAQLDEWLGI (175 aa)) form the EngB-type G domain. GTP is bound by residues 32–39 (GRSNVGKS), 59–63 (GRTQM), 77–80 (DLPG), 144–147 (TKSD), and 177–179 (FSA). Mg(2+) contacts are provided by Ser-39 and Thr-61.

This sequence belongs to the TRAFAC class TrmE-Era-EngA-EngB-Septin-like GTPase superfamily. EngB GTPase family. Mg(2+) is required as a cofactor.

Its function is as follows. Necessary for normal cell division and for the maintenance of normal septation. This chain is Probable GTP-binding protein EngB, found in Nitrosococcus oceani (strain ATCC 19707 / BCRC 17464 / JCM 30415 / NCIMB 11848 / C-107).